We begin with the raw amino-acid sequence, 256 residues long: Small ribosomal subunit protein eS1A (256 aa).

Ala-2 is subject to N-acetylalanine; partial.

This sequence belongs to the eukaryotic ribosomal protein eS1 family. As to quaternary structure, component of the small ribosomal subunit. Mature ribosomes consist of a small (40S) and a large (60S) subunit. The 40S subunit contains about 33 different proteins and 1 molecule of RNA (18S). The 60S subunit contains about 49 different proteins and 3 molecules of RNA (25S, 5.8S and 5S).

Its subcellular location is the cytoplasm. This chain is Small ribosomal subunit protein eS1A, found in Debaryomyces hansenii (strain ATCC 36239 / CBS 767 / BCRC 21394 / JCM 1990 / NBRC 0083 / IGC 2968) (Yeast).